The following is a 450-amino-acid chain: Phosphoglucosamine mutase (450 aa).

Ser101 (phosphoserine intermediate) is an active-site residue. Mg(2+)-binding residues include Ser101, Asp240, Asp242, and Asp244. A Phosphoserine modification is found at Ser101.

It belongs to the phosphohexose mutase family. Requires Mg(2+) as cofactor. In terms of processing, activated by phosphorylation.

It carries out the reaction alpha-D-glucosamine 1-phosphate = D-glucosamine 6-phosphate. Functionally, catalyzes the conversion of glucosamine-6-phosphate to glucosamine-1-phosphate. This Streptococcus equi subsp. zooepidemicus (strain H70) protein is Phosphoglucosamine mutase.